The following is a 190-amino-acid chain: Xanthine phosphoribosyltransferase 1 (190 aa).

Residues L20 and N27 each contribute to the xanthine site. 129 to 133 contributes to the 5-phospho-alpha-D-ribose 1-diphosphate binding site; the sequence is AQGCA. K157 contributes to the xanthine binding site.

This sequence belongs to the purine/pyrimidine phosphoribosyltransferase family. Xpt subfamily. Homodimer.

It is found in the cytoplasm. The enzyme catalyses XMP + diphosphate = xanthine + 5-phospho-alpha-D-ribose 1-diphosphate. It participates in purine metabolism; XMP biosynthesis via salvage pathway; XMP from xanthine: step 1/1. Converts the preformed base xanthine, a product of nucleic acid breakdown, to xanthosine 5'-monophosphate (XMP), so it can be reused for RNA or DNA synthesis. The chain is Xanthine phosphoribosyltransferase 1 from Clostridium perfringens (strain ATCC 13124 / DSM 756 / JCM 1290 / NCIMB 6125 / NCTC 8237 / Type A).